A 449-amino-acid polypeptide reads, in one-letter code: Amidophosphoribosyltransferase (449 aa).

The propeptide occupies 1–9; sequence MRGEIMKEK. The active-site Nucleophile is C10. In terms of domain architecture, Glutamine amidotransferase type-2 spans 10-224; that stretch reads CGIFGAYSQD…PGEVIVVKDG (215 aa). C239 serves as a coordination point for [4Fe-4S] cluster. Mg(2+) contacts are provided by S286, D346, and D347. [4Fe-4S] cluster is bound by residues C383, C432, and C435.

This sequence in the C-terminal section; belongs to the purine/pyrimidine phosphoribosyltransferase family. Requires Mg(2+) as cofactor. [4Fe-4S] cluster is required as a cofactor.

The catalysed reaction is 5-phospho-beta-D-ribosylamine + L-glutamate + diphosphate = 5-phospho-alpha-D-ribose 1-diphosphate + L-glutamine + H2O. It functions in the pathway purine metabolism; IMP biosynthesis via de novo pathway; N(1)-(5-phospho-D-ribosyl)glycinamide from 5-phospho-alpha-D-ribose 1-diphosphate: step 1/2. In terms of biological role, catalyzes the formation of phosphoribosylamine from phosphoribosylpyrophosphate (PRPP) and glutamine. The sequence is that of Amidophosphoribosyltransferase from Pyrococcus horikoshii (strain ATCC 700860 / DSM 12428 / JCM 9974 / NBRC 100139 / OT-3).